The following is a 248-amino-acid chain: MVGSRHPDQCAKRWHHSLDPNVKRGPWTMEEDSSLLEAVQKIGRDWKEIGRELFPSRSTTDIKNRYVILSRRRGPSPAIPENCSSIDIETHSSSLADSKPPIPAELLTPEVDFSIANTPCELDSSNLAPDTLSINMTLPSDLPSYLSLPLPDTAETDHALDESSTAWEIPDWTAFDNQCLFTPGASELEGSFTSRNHEEPPQPLPVPDIPGPSTLVLEDLRPETVNLVIDTLLRTNSKFGMRMYNTGS.

Residues 1–22 (MVGSRHPDQCAKRWHHSLDPNV) show a composition bias toward basic and acidic residues. The segment at 1 to 25 (MVGSRHPDQCAKRWHHSLDPNVKRG) is disordered. The 56-residue stretch at 19–74 (DPNVKRGPWTMEEDSSLLEAVQKIGRDWKEIGRELFPSRSTTDIKNRYVILSRRRG) folds into the HTH myb-type domain. Positions 46–70 (WKEIGRELFPSRSTTDIKNRYVILS) form a DNA-binding region, H-T-H motif. The tract at residues 186–208 (SELEGSFTSRNHEEPPQPLPVPD) is disordered.

Its subcellular location is the nucleus. Functionally, transcription factor that regulates the expression of the gene cluster that mediates the biosynthesis of cichorine, a phytotoxin active against knapweed, corn, and soybeans. The chain is Transcription factor cicD from Emericella nidulans (strain FGSC A4 / ATCC 38163 / CBS 112.46 / NRRL 194 / M139) (Aspergillus nidulans).